A 530-amino-acid chain; its full sequence is Metal transporter Nramp2 (530 aa).

The tract at residues 1–35 (MENDVKENLEEEEDRLLPPPPPSQSLPSTDSESEA) is disordered. The next 12 membrane-spanning stretches (helical) occupy residues 68-88 (LWLF…PGNL), 96-116 (AIAG…GLLI), 153-173 (LALI…IQIL), 177-197 (FLPL…FLFL), 205-225 (LEAV…WMFG), 251-271 (AVGV…SALV), 297-317 (VALF…AKGF), 339-359 (FGGG…AAGQ), 395-415 (IVPT…LDVL), 418-438 (WLNV…LTLV), 456-476 (IAWT…LDFF), and 484-504 (LFGV…VYLI).

This sequence belongs to the NRAMP (TC 2.A.55) family.

Its subcellular location is the membrane. Seems to be involved in iron uptake. The chain is Metal transporter Nramp2 (NRAMP2) from Arabidopsis thaliana (Mouse-ear cress).